We begin with the raw amino-acid sequence, 141 residues long: Large ribosomal subunit protein uL11 (141 aa).

Belongs to the universal ribosomal protein uL11 family. In terms of assembly, part of the ribosomal stalk of the 50S ribosomal subunit. Interacts with L10 and the large rRNA to form the base of the stalk. L10 forms an elongated spine to which L12 dimers bind in a sequential fashion forming a multimeric L10(L12)X complex. In terms of processing, one or more lysine residues are methylated.

Its function is as follows. Forms part of the ribosomal stalk which helps the ribosome interact with GTP-bound translation factors. The polypeptide is Large ribosomal subunit protein uL11 (Agathobacter rectalis (strain ATCC 33656 / DSM 3377 / JCM 17463 / KCTC 5835 / VPI 0990) (Eubacterium rectale)).